The primary structure comprises 417 residues: Serine hydroxymethyltransferase (417 aa).

(6S)-5,6,7,8-tetrahydrofolate contacts are provided by residues Leu121 and 125–127 (GHL). Residue Lys229 is modified to N6-(pyridoxal phosphate)lysine. 355-357 (SPF) lines the (6S)-5,6,7,8-tetrahydrofolate pocket.

It belongs to the SHMT family. As to quaternary structure, homodimer. Pyridoxal 5'-phosphate serves as cofactor.

It localises to the cytoplasm. It catalyses the reaction (6R)-5,10-methylene-5,6,7,8-tetrahydrofolate + glycine + H2O = (6S)-5,6,7,8-tetrahydrofolate + L-serine. The protein operates within one-carbon metabolism; tetrahydrofolate interconversion. It functions in the pathway amino-acid biosynthesis; glycine biosynthesis; glycine from L-serine: step 1/1. Functionally, catalyzes the reversible interconversion of serine and glycine with tetrahydrofolate (THF) serving as the one-carbon carrier. This reaction serves as the major source of one-carbon groups required for the biosynthesis of purines, thymidylate, methionine, and other important biomolecules. Also exhibits THF-independent aldolase activity toward beta-hydroxyamino acids, producing glycine and aldehydes, via a retro-aldol mechanism. The sequence is that of Serine hydroxymethyltransferase from Xanthomonas campestris pv. campestris (strain 8004).